The sequence spans 101 residues: Small ribosomal subunit protein uS14 (101 aa).

Belongs to the universal ribosomal protein uS14 family. Part of the 30S ribosomal subunit. Contacts proteins S3 and S10.

In terms of biological role, binds 16S rRNA, required for the assembly of 30S particles and may also be responsible for determining the conformation of the 16S rRNA at the A site. This Xylella fastidiosa (strain M23) protein is Small ribosomal subunit protein uS14.